Consider the following 298-residue polypeptide: MTKKMDIQTMILTLQKFWGDKGCMLMQAYDVEKGAGTMSPYTFLRAIGPEPWNAAYVEPSRRPADGRYGENPNRLFQHHQFQVVMKPSPENIQEYYLDSLAALGINPLEHDIRFVEDNWENPSMGCAGVGWEVWLDGMEVSQFTYFQVVGGLEVSPVTSEITYGVERLASYIQDVNSVFDLEWGDGVLYGDIFKEPEYEHSKYAFEVSNQEMLLKFFDAYEKEAWRLMDLGLVHPAYDYILKCSHTFNLLDARGAVSVTERAGYMSRIRKMAHKVARAFVAERKKLGFPLLQHQTEVE.

This sequence belongs to the class-II aminoacyl-tRNA synthetase family. In terms of assembly, tetramer of two alpha and two beta subunits.

It localises to the cytoplasm. The enzyme catalyses tRNA(Gly) + glycine + ATP = glycyl-tRNA(Gly) + AMP + diphosphate. In Lacticaseibacillus paracasei (strain ATCC 334 / BCRC 17002 / CCUG 31169 / CIP 107868 / KCTC 3260 / NRRL B-441) (Lactobacillus paracasei), this protein is Glycine--tRNA ligase alpha subunit.